We begin with the raw amino-acid sequence, 742 residues long: Collectin-12 (742 aa).

Topologically, residues 1–37 (MKDDFAEEEEVQSFGYKRFGIQEGTQCTKCKNNWALK) are cytoplasmic. The helical; Signal-anchor for type II membrane protein transmembrane segment at 38-58 (FSIILLYILCALLTITVAILG) threads the bilayer. The Extracellular portion of the chain corresponds to 59 to 742 (YKVVEKMDNV…DRETVLSSAL (684 aa)). An N-linked (GlcNAc...) asparagine glycan is attached at Asn-67. Residues 73–141 (ETSRQTYDDK…NKDTLEKLQA (69 aa)) adopt a coiled-coil conformation. Asn-159, Asn-168, and Asn-271 each carry an N-linked (GlcNAc...) asparagine glycan. The stretch at 215–328 (QQRNLITNLQ…KDAENRTAIK (114 aa)) forms a coiled coil. The interval 439-608 (TILQGPPGPR…TPAPEDNGCP (170 aa)) is disordered. 3 consecutive Collagen-like domains span residues 443-472 (GPPG…KGEK), 473-529 (GEPG…PGPP), and 530-589 (GPPG…SGAV). Composition is skewed to low complexity over residues 502–525 (KGSQ…SSGD) and 534–556 (KEGL…VGEP). Positions 571–585 (PGMPGPKGPPGPPGP) are enriched in pro residues. 3 cysteine pairs are disulfide-bonded: Cys-607/Cys-618, Cys-635/Cys-730, and Cys-708/Cys-722. In terms of domain architecture, C-type lectin spans 614–731 (FTDKCYYFSV…CEDVNNFICE (118 aa)). The Ca(2+) site is built by Phe-644, Asn-646, Glu-650, Asp-670, and Glu-674. A carbohydrate contacts are provided by Lys-691, Gln-694, and Asp-696. Ca(2+) contacts are provided by Gln-694, Asp-696, Asn-697, Glu-706, Asp-707, Asn-718, Asp-719, and Glu-731. Glu-706 is an a carbohydrate binding site. The a carbohydrate site is built by Asn-718 and Asp-719.

In terms of assembly, the extracellular domain forms a stable trimer. The extracellular domain interacts with fibrillar amyloid-beta peptide. Expressed in perivascular macrophages. Expressed in plaques-surrounding reactive astrocytes and in perivascular astrocytes associated with cerebral amyloid angiopathy (CAA) in the temporal cortex of Alzheimer patient (at protein level). Strongly expressed in placenta. Moderately expressed in heart, skeletal muscle, small intestine and lung. Weakly expressed in brain, colon, thymus and kidney. Expressed in nurse-like cells. Expressed in reactive astrocytes and vascular/perivascular cells in the brain of Alzheimer patient.

The protein resides in the membrane. Scavenger receptor that displays several functions associated with host defense. Promotes binding and phagocytosis of Gram-positive, Gram-negative bacteria and yeast. Mediates the recognition, internalization and degradation of oxidatively modified low density lipoprotein (oxLDL) by vascular endothelial cells. Binds to several carbohydrates including Gal-type ligands, D-galactose, L- and D-fucose, GalNAc, T and Tn antigens in a calcium-dependent manner and internalizes specifically GalNAc in nurse-like cells. Also binds to sialyl Lewis X or a trisaccharide and asialo-orosomucoid (ASOR). May also play a role in the clearance of amyloid-beta in Alzheimer disease. In Homo sapiens (Human), this protein is Collectin-12 (COLEC12).